We begin with the raw amino-acid sequence, 458 residues long: L-hydantoinase (458 aa).

The Zn(2+) site is built by His-60, His-62, Lys-147, His-183, His-239, and Asp-312. Position 147 is an N6-carboxylysine (Lys-147).

As to quaternary structure, homotetramer. Zn(2+) serves as cofactor. Carboxylation allows a single lysine to coordinate two zinc ions.

In terms of biological role, rather more predominant for the cleavage of aryl- than for alkyl-hydantoin derivatives. The stereoselectivity of this enzyme depends on the substrate used for bioconversion: strictly L-selective for the cleavage of D,L-5-indolylmethylhydantoin, but D-selective for the hydrolysis of D,L-methylthioethylhydantoin. This Paenarthrobacter aurescens (Arthrobacter aurescens) protein is L-hydantoinase (lhyD).